Here is a 372-residue protein sequence, read N- to C-terminus: MDSVIQEAKRVIIKVGSSLVTNDGKGLDANAIQKWAAQIAQLRALGKEVVLVSSGAIVEGMQRLGFDKRPVGIHELQACAAVGQMGLAQIYETSFRQHDVRTAQILLTHADLADRERYLNARSTLFTLLRLGVVPIINENDTVVTDEIKFGDNDTLGALVANLIEADALIILTDQRGLFSADPRKDPNAVFIHEAKAGDLKLEAMAGGAGSSLGRGGMLTKILAAKRAAFSGAHTVIAWGREDNVLTRLAGGEAIGTQLTAQTAQLTARKQWMADHLQTAGAVVLDNGAVQKLTAEGKSLLPIGVTDVSGSFGRGDVITCIDQGGRAVARGISNYASSDARRIMRKPSADIAAILGFVEEPELIHRDNLVLL.

Residue Lys14 participates in ATP binding. The substrate site is built by Ser54, Asp141, and Asn153. Residue Thr173–Asp174 participates in ATP binding. In terms of domain architecture, PUA spans Ala280–Val358.

Belongs to the glutamate 5-kinase family.

The protein resides in the cytoplasm. The enzyme catalyses L-glutamate + ATP = L-glutamyl 5-phosphate + ADP. The protein operates within amino-acid biosynthesis; L-proline biosynthesis; L-glutamate 5-semialdehyde from L-glutamate: step 1/2. Its function is as follows. Catalyzes the transfer of a phosphate group to glutamate to form L-glutamate 5-phosphate. The polypeptide is Glutamate 5-kinase (Janthinobacterium sp. (strain Marseille) (Minibacterium massiliensis)).